We begin with the raw amino-acid sequence, 263 residues long: Transcription factor bHLH27 (263 aa).

The segment covering 32–47 has biased composition (low complexity); it reads EAFSGSGESSSPDGAA. Residues 32-61 are disordered; that stretch reads EAFSGSGESSSPDGAATSPASSKNVVSERN. The span at 49–58 shows a compositional bias: polar residues; that stretch reads SPASSKNVVS. Residues 50–99 enclose the bHLH domain; that stretch reads PASSKNVVSERNRRQKLNQRLFALRSVVPNISKLDKASVIKDSIDYMQEL.

As to quaternary structure, homodimer. Expressed constitutively in roots, leaves, stems, and flowers.

Its subcellular location is the nucleus. The polypeptide is Transcription factor bHLH27 (BHLH27) (Arabidopsis thaliana (Mouse-ear cress)).